Here is a 54-residue protein sequence, read N- to C-terminus: Metallothionein-4 (54 aa).

It belongs to the metallothionein superfamily. Type 11 family.

The polypeptide is Metallothionein-4 (MTP4) (Yarrowia lipolytica (strain CLIB 122 / E 150) (Yeast)).